A 584-amino-acid polypeptide reads, in one-letter code: DNA mismatch repair protein MutL (584 aa).

It belongs to the DNA mismatch repair MutL/HexB family.

In terms of biological role, this protein is involved in the repair of mismatches in DNA. It is required for dam-dependent methyl-directed DNA mismatch repair. May act as a 'molecular matchmaker', a protein that promotes the formation of a stable complex between two or more DNA-binding proteins in an ATP-dependent manner without itself being part of a final effector complex. The protein is DNA mismatch repair protein MutL of Buchnera aphidicola subsp. Acyrthosiphon pisum (strain 5A).